The primary structure comprises 932 residues: Chitin synthase regulatory factor 3 (932 aa).

The segment covering 1–16 has biased composition (basic and acidic residues); that stretch reads MKDSHSSRRKYEKEKL. 3 disordered regions span residues 1-53, 264-356, and 374-406; these read MKDS…PTSR, TLEE…LQQP, and EVPAPTFDRRNVSRNSNNNSPEGYDNNRTNPTV. 3 stretches are compositionally biased toward polar residues: residues 35-53, 274-285, and 308-319; these read SGNTASSSSPTLQFRPTSR, DSITNTVSNASS, and SHFSSTDSNTDS. The segment covering 337–349 has biased composition (basic and acidic residues); the sequence is KSSETLKNPRNDD. Phosphoserine is present on Ser393. Sel1-like repeat units lie at residues 638 to 674, 675 to 710, 711 to 747, 751 to 788, 789 to 825, 826 to 863, and 864 to 899; these read PEALFLIGQFHSQGVLGFRRDLGKAFELYSLAAKKGH, PLSNYRVAVCLQTGTGVKPDTSKCVAIYKKAAEMDV, VEAMFRIALIYLNGLLGQKRNISLGVQWLERACKSKG, VRAMYELAKIYEQPDRYGVSATPERKFELYKQSAVYGY, AAAQCKLGECYEHGLLGCLAEPRRSIFWYTRAAEQDY, GEAELGLSGWYLTGSEGILPKNGEEALLWAHKAACKGL, and AKAQYAVGFMMEQGIGVAADPSSAHNWYIRAAKQGF. The disordered stretch occupies residues 905 to 932; that stretch reads RLEEQALSSKQTHSKAPKKKQQEQCVVM.

This is Chitin synthase regulatory factor 3 (chr3) from Schizosaccharomyces pombe (strain 972 / ATCC 24843) (Fission yeast).